We begin with the raw amino-acid sequence, 93 residues long: Putative membrane protein insertion efficiency factor (93 aa).

Belongs to the UPF0161 family.

It is found in the cell inner membrane. In terms of biological role, could be involved in insertion of integral membrane proteins into the membrane. The chain is Putative membrane protein insertion efficiency factor from Cupriavidus taiwanensis (strain DSM 17343 / BCRC 17206 / CCUG 44338 / CIP 107171 / LMG 19424 / R1) (Ralstonia taiwanensis (strain LMG 19424)).